The chain runs to 213 residues: Uracil phosphoribosyltransferase (213 aa).

Residues R77, R102, and D129–S137 each bind 5-phospho-alpha-D-ribose 1-diphosphate. Uracil-binding positions include I198 and G203–A205. Residue D204 coordinates 5-phospho-alpha-D-ribose 1-diphosphate.

Belongs to the UPRTase family. It depends on Mg(2+) as a cofactor.

The enzyme catalyses UMP + diphosphate = 5-phospho-alpha-D-ribose 1-diphosphate + uracil. Its pathway is pyrimidine metabolism; UMP biosynthesis via salvage pathway; UMP from uracil: step 1/1. With respect to regulation, allosterically activated by GTP. Functionally, catalyzes the conversion of uracil and 5-phospho-alpha-D-ribose 1-diphosphate (PRPP) to UMP and diphosphate. The polypeptide is Uracil phosphoribosyltransferase (Mycobacteroides abscessus (strain ATCC 19977 / DSM 44196 / CCUG 20993 / CIP 104536 / JCM 13569 / NCTC 13031 / TMC 1543 / L948) (Mycobacterium abscessus)).